A 9159-amino-acid polypeptide reads, in one-letter code: Halomucin (9159 aa).

A signal peptide spans 1–30 (MSQTAKPIFAVVVALIVLISGVAFIGSVSA). C-type lectin domains follow at residues 644–776 (TTGN…YLVE) and 929–1060 (YDGH…VEYG). The span at 1310 to 1332 (QPQTVNDPDAVSTRNNNVGSNGL) shows a compositional bias: polar residues. Positions 1310 to 1351 (QPQTVNDPDAVSTRNNNVGSNGLDSKIEDDQNNGADGNPHGT) are disordered. The segment at 1756–3380 (VGGLIGESSG…GFNGEHVGGL (1625 aa)) is V-G-G-L motif-rich region. 8 disordered regions span residues 3484–3514 (GATA…PAPQ), 4878–4912 (ESYW…TTPA), 6570–6589 (TDSA…SSGQ), 7047–7097 (TPTV…GINT), 7660–7702 (ATDS…NPGG), 7888–7923 (IDGD…EPAL), 8212–8237 (STQQ…GAAD), and 8369–8614 (DSTA…GSST). Gly residues predominate over residues 3495–3505 (GTPGGATGYGS). A compositionally biased stretch (basic and acidic residues) spans 4880 to 4890 (YWDKGATDKSD). Composition is skewed to polar residues over residues 7048-7057 (PTVTINSSSD) and 7068-7078 (GEDSTSSNESS). Over residues 7079–7092 (DGTESDQGDPEDDI) the composition is skewed to acidic residues. Residues 7681-7698 (VTGSTPTFVSSGTVTTPE) are compositionally biased toward polar residues. The Cadherin domain occupies 7686 to 7793 (PTFVSSGTVT…ITDVDEQPTG (108 aa)). 2 stretches are compositionally biased toward acidic residues: residues 7888-7898 (IDGDGLADDNE) and 7905-7920 (DNDD…EDQE). Acidic residues predominate over residues 8378 to 8390 (ALEDDSSNQDSGD). Low complexity-rich tracts occupy residues 8391–8529 (DSSN…SSQN) and 8538–8548 (SAAAVGAESGS). Gly residues-rich tracts occupy residues 8549-8566 (EMGG…GDGS) and 8574-8608 (AGGG…GSSS).

Probably glycosylated with sugar containing sialic acid. This may further contribute to its overall negative charge, thereby creating an aqueous shield covering the cells.

Its subcellular location is the secreted. In terms of biological role, may protect the organism from desiccation stress. May also contribute to the rigidity and maintenance of the unique square cell morphology of H.walsbyi. The polypeptide is Halomucin (hmu) (Haloquadratum walsbyi (strain DSM 16790 / HBSQ001)).